The chain runs to 867 residues: MAKVLFSSFQQTGISGSLKSGQLSGVFINGTNLKSNAHAKRFRKNSTSSITIRCCASNSPTLENTKLAGAPEKRQKKKQLPYQGILHVPGDRVEELDTRETSLLVAEVKGWLMKLASGKGEISPSAYDTAWVARIASESDSSLPEFPEALEWIINSQLPDGSWGDDRHLQLYDRVLSTLSCLVTLKTWDIGHNSIAQGTKFLRENMIKLKQDDGDLLSGFEVTFPMMLHEAKQLGLDIPYETEFTRLLEISTKKKLAKIPLDKLHSAPTTLLYSLEGLQDLEIDWQKILKLQSKDGSFLSSPSSTACVYLKTKDRKSLQYLQNAMEDQNYAVPCHYPIDLFESLWVVDTIERLGIDVFFRDEIKAVLDYVYSFWTNEGIGWGSTCLVNDIDDTAMAFRILRMHGYNVSPDAFNQFWLPGDKFCCFVGELSHGVSEMLNLHRASQVDFPNEAILTKTFKYSHDYLLNVDSAHMDKWATKKNLMGEVAFELANPFHDCLPRIYNNAYIKHYGMDDLWIAKTIYRLPLVNNKVFLELANRYAQQCQLYQPAELTKLVNWWHSSRFEDIPSTRLTANIDMLPYIYYVICATFHEQEFAQLRVFFSKACCLNTLFDDLMDCATSIEELDRLQNVIERWDISLSHELPLEYRIPFQEFYNTVLVMTEAASKIHKNLSPEFICKYLSGIYTKLIKSEIADARWKIEGYIPSFEEYMENAEVSISTWVHVLMSILFCGEPLTEEILNTIYDSRPLKLDRIICRLCNDIQTYKIEMKLGQPTQGVSCYMKEHPGATEEDALVYLQSLLEKTKRELNESYFITHENDLPKNIKRFNFEMVRMMLITYNETRQVDLFRNPDNELKDMIKFCLETYRTL.

A chloroplast-targeting transit peptide spans 1 to 55 (MAKVLFSSFQQTGISGSLKSGQLSGVFINGTNLKSNAHAKRFRKNSTSSITIRCC). K255 provides a ligand contact to substrate. Positions 389 and 391 each coordinate Mg(2+). The DXDD motif motif lies at 389-392 (DIDD). A substrate-binding site is contributed by K474. D611, D615, N758, T762, and E766 together coordinate Mg(2+). A DDXXD motif motif is present at residues 611–615 (DDLMD).

It belongs to the terpene synthase family. The cofactor is Mg(2+).

The protein resides in the plastid. Its subcellular location is the chloroplast. It catalyses the reaction (+)-copalyl diphosphate = miltiradiene + diphosphate. The enzyme catalyses (2E,6E,10E)-geranylgeranyl diphosphate = (+)-copalyl diphosphate. It participates in secondary metabolite biosynthesis; terpenoid biosynthesis. Functionally, bifunctional diterpene cyclase that catalyzes the successive two-step type-B (protonation-initiated cyclization) and type-A (ionization-initiated cyclization) reactions of geranylgeranyl diphosphate (GGDP) producing successively (+)-copalyl diphosphate and miltiradiene. The protein is Bifunctional diterpene synthase, chloroplastic (MDS) of Selaginella moellendorffii (Spikemoss).